The sequence spans 472 residues: Inhibitor of Apoptosis OPG037 (472 aa).

ANK repeat units follow at residues 97–126, 130–161, 233–263, 267–297, 322–351, and 353–377; these read DGNY…DPNA, HNKT…KINN, DGNT…DVNK, FGDS…VITD, YDST…ICED, and MYYA…SVDF.

It belongs to the orthopoxvirus OPG037 protein family. In terms of assembly, may interact with host caspase-9-Apaf-1 complex.

Its subcellular location is the host cytoplasm. In terms of biological role, inhibits host apoptosis. Acts by associating with host apoptosome. The protein is Inhibitor of Apoptosis OPG037 (OPG037) of Vaccinia virus (strain Western Reserve) (VACV).